The primary structure comprises 65 residues: Conotoxin Lp5.1 (65 aa).

An N-terminal signal peptide occupies residues 1–22 (MRCVPVFIILLLLIPSAPSVDA). Positions 23 to 50 (QRKTKDDVPLASFHDNAKRTLKRLWNKR) are excised as a propeptide.

Belongs to the conotoxin T superfamily. In terms of processing, contains 2 disulfide bonds that can be either 'C1-C3, C2-C4' or 'C1-C4, C2-C3', since these disulfide connectivities have been observed for conotoxins with cysteine framework V (for examples, see AC P0DQQ7 and AC P81755). Expressed by the venom duct.

The protein localises to the secreted. The sequence is that of Conotoxin Lp5.1 from Conus leopardus (Leopard cone).